We begin with the raw amino-acid sequence, 218 residues long: UPF0598 protein C8orf82 homolog (218 aa).

The protein belongs to the UPF0598 family.

The sequence is that of UPF0598 protein C8orf82 homolog from Mus musculus (Mouse).